A 574-amino-acid chain; its full sequence is Glycine--tRNA ligase (574 aa).

Substrate-binding residues include Arg-96 and Glu-162. ATP-binding positions include 194–196, 204–209, 327–328, and 450–453; these read RNE, IRLREF, EC, and GIDR. 209 to 213 is a substrate binding site; sequence FTQAE. Residue 446–450 participates in substrate binding; it reads EPSYG.

This sequence belongs to the class-II aminoacyl-tRNA synthetase family.

The protein resides in the cytoplasm. It carries out the reaction tRNA(Gly) + glycine + ATP = glycyl-tRNA(Gly) + AMP + diphosphate. Functionally, catalyzes the attachment of glycine to tRNA(Gly). In Methanococcus maripaludis (strain C7 / ATCC BAA-1331), this protein is Glycine--tRNA ligase.